Here is a 582-residue protein sequence, read N- to C-terminus: Aspartate--tRNA ligase (582 aa).

E174 contributes to the L-aspartate binding site. The interval 198–201 (QITK) is aspartate. R220 is an L-aspartate binding site. Residues 220–222 (RDE) and Q229 contribute to the ATP site. L-aspartate is bound at residue H443. E477 is an ATP binding site. Position 484 (R484) interacts with L-aspartate. Residue 529–532 (GLDR) participates in ATP binding.

The protein belongs to the class-II aminoacyl-tRNA synthetase family. Type 1 subfamily. Homodimer.

It localises to the cytoplasm. It carries out the reaction tRNA(Asp) + L-aspartate + ATP = L-aspartyl-tRNA(Asp) + AMP + diphosphate. In terms of biological role, catalyzes the attachment of L-aspartate to tRNA(Asp) in a two-step reaction: L-aspartate is first activated by ATP to form Asp-AMP and then transferred to the acceptor end of tRNA(Asp). In Streptococcus pyogenes serotype M6 (strain ATCC BAA-946 / MGAS10394), this protein is Aspartate--tRNA ligase.